Here is a 468-residue protein sequence, read N- to C-terminus: COBRA-like protein 5 (468 aa).

An N-terminal signal peptide occupies residues 1 to 22; sequence MELHRCSLLALLLAVTCSVAVA. N-linked (GlcNAc...) asparagine glycosylation is found at N31, N156, N164, and N228. The disordered stretch occupies residues 251-278; the sequence is GGGKNARAGDGRSRRNSGGGGGHSGGTE. N-linked (GlcNAc...) asparagine glycosylation is found at N340, N355, and N374. N443 is lipidated: GPI-anchor amidated asparagine. A propeptide spans 444–468 (removed in mature form); that stretch reads SAPIGPPRSVAAAASAILVVLLLVA.

This sequence belongs to the COBRA family. Expressed mainly in developing sclerenchyma cells and in vascular bundles.

It is found in the cell membrane. Its function is as follows. Involved in determining the orientation of cell expansion, probably by playing an important role in cellulose deposition. May act by recruiting cellulose synthesizing complexes to discrete positions on the cell surface. This chain is COBRA-like protein 5 (BC1), found in Oryza sativa subsp. indica (Rice).